We begin with the raw amino-acid sequence, 183 residues long: Capsid protein (183 aa).

Residues 136–183 form a disordered region; sequence NAPILSTLPETTVVRRRGRSPRRRTPSPRRRRSQSPRRRRSQSRESQC. Over residues 149-176 the composition is skewed to basic residues; that stretch reads VRRRGRSPRRRTPSPRRRRSQSPRRRRS. A phosphoserine; by host mark is found at S155, S162, and S170. Residues 155–161 form a 1; half-length repeat; it reads SPRRRTP. Residues 155–177 form a 3 X 8 AA repeats of S-P-R-R-R-[PR]-S-Q region; that stretch reads SPRRRTPSPRRRRSQSPRRRRSQ. The Bipartite nuclear localization signal motif lies at 158–175; that stretch reads RRTPSPRRRRSQSPRRRR. 2 repeat units span residues 162–169 and 170–177. The interval 177–183 is RNA binding; the sequence is QSRESQC.

The protein belongs to the orthohepadnavirus core antigen family. As to quaternary structure, homodimerizes, then multimerizes. Interacts with cytosol exposed regions of viral L glycoprotein present in the reticulum-to-Golgi compartment. Interacts with human FLNB. Phosphorylated form interacts with host importin alpha; this interaction depends on the exposure of the NLS, which itself depends upon genome maturation and/or phosphorylation of the capsid protein. Interacts with host NUP153. Phosphorylated by host SRPK1, SRPK2, and maybe protein kinase C or GAPDH. Phosphorylation is critical for pregenomic RNA packaging. Protein kinase C phosphorylation is stimulated by HBx protein and may play a role in transport of the viral genome to the nucleus at the late step during the viral replication cycle.

The protein resides in the virion. Its subcellular location is the host cytoplasm. In terms of biological role, self assembles to form an icosahedral capsid. Most capsids appear to be large particles with an icosahedral symmetry of T=4 and consist of 240 copies of capsid protein, though a fraction forms smaller T=3 particles consisting of 180 capsid proteins. Entering capsids are transported along microtubules to the nucleus. Phosphorylation of the capsid is thought to induce exposure of nuclear localization signal in the C-terminal portion of the capsid protein that allows binding to the nuclear pore complex via the importin (karyopherin-) alpha and beta. Capsids are imported in intact form through the nuclear pore into the nuclear basket, where it probably binds NUP153. Only capsids that contain the mature viral genome can release the viral DNA and capsid protein into the nucleoplasm. Immature capsids get stuck in the basket. Capsids encapsulate the pre-genomic RNA and the P protein. Pre-genomic RNA is reverse-transcribed into DNA while the capsid is still in the cytoplasm. The capsid can then either be directed to the nucleus, providing more genomes for transcription, or bud through the endoplasmic reticulum to provide new virions. The protein is Capsid protein of Homo sapiens (Human).